Reading from the N-terminus, the 579-residue chain is Glypican-3 (579 aa).

The first 24 residues, Met1–Ala24, serve as a signal peptide directing secretion. At Gln25 the chain carries Pyrrolidone carboxylic acid. Disulfide bonds link Cys34/Cys71, Cys64/Cys261, Cys72/Cys264, Cys196/Cys348, Cys251/Cys284, Cys273/Cys421, and Cys277/Cys409. 2 N-linked (GlcNAc...) asparagine glycosylation sites follow: Asn123 and Asn240. Ser351 is modified (phosphoserine). Asn417 carries an N-linked (GlcNAc...) asparagine glycan. Ser494 and Ser508 each carry an O-linked (Xyl...) (glycosaminoglycan) serine glycan. The segment at Asp533 to His552 is disordered. Ser553 carries GPI-anchor amidated serine lipidation. Residues Val554–His579 constitute a propeptide, removed in mature form.

Belongs to the glypican family. In terms of assembly, heterodimer; disulfide-linked. Cleavage by a furin-like convertase results in production of alpha and beta chains which form a disulfide-linked heterodimer. Interacts with DPP4. Interacts with FGF2. Interacts with WNT5A. Also interacts with WNT3A and WNT7B. Interacts with hedgehog protein SHH; the heparan sulfate chains are not required for the interaction. Also interacts with hedgehog protein IHH. Interacts with CD81. Interacts with Wnt receptors FZD4, FZD7 and FZD8; the heparan sulfate chains are required for the interaction. O-glycosylated; contains heparan sulfate and/or chondroitin sulfate. Post-translationally, cleaved intracellularly by a furin-like convertase to generate 2 subunits, alpha and beta, which remain associated through disulfide bonds and are associated with the cell surface via the GPI-anchor. This processing is essential for its role in inhibition of hedgehog signaling. A second proteolytic event may result in cleavage of the protein on the cell surface, separating it from the GPI-anchor and leading to its shedding from the cell surface. As to expression, in the developing limb, absent from the apical epidermal ridge at 11 dpc but highly expressed in the underlying mesenchyme. Expression in the mesenchyme at this stage is asymmetric with highest levels in the regions of the distal mesenchyme within the progress zone and within the proximal anterior and posterior limb bud. At later developmental stages including 12.5 and 13.5 dpc, expression is restricted to the interdigital webs and the regions of chondrocytic differentiation of the developing bones. In the embryonic kidney, expressed in both the ureteric bud and mesenchymal cells as early as 13.5 dpc. Expression at 16.5 dpc is similar to that at 13.5 dpc but decreases by 18.5 dpc.

Its subcellular location is the cell membrane. In terms of biological role, cell surface proteoglycan. Negatively regulates the hedgehog signaling pathway when attached via the GPI-anchor to the cell surface by competing with the hedgehog receptor PTC1 for binding to hedgehog proteins. Binding to the hedgehog protein SHH triggers internalization of the complex by endocytosis and its subsequent lysosomal degradation. Positively regulates the canonical Wnt signaling pathway by binding to the Wnt receptor Frizzled and stimulating the binding of the Frizzled receptor to Wnt ligands. Positively regulates the non-canonical Wnt signaling pathway. Binds to CD81 which decreases the availability of free CD81 for binding to the transcriptional repressor HHEX, resulting in nuclear translocation of HHEX and transcriptional repression. Inhibits the dipeptidyl peptidase activity of DPP4. Plays a role in limb patterning and skeletal development by controlling the cellular response to BMP4. Modulates the effects of growth factors BMP2, BMP7 and FGF7 on renal branching morphogenesis. Required for coronary vascular development. Plays a role in regulating cell movements during gastrulation. This Mus musculus (Mouse) protein is Glypican-3 (Gpc3).